A 248-amino-acid polypeptide reads, in one-letter code: Ribosomal RNA small subunit methyltransferase J (248 aa).

Residues 101-102 (RD), 117-118 (ER), 153-154 (SS), and D171 contribute to the S-adenosyl-L-methionine site.

This sequence belongs to the methyltransferase superfamily. RsmJ family.

It localises to the cytoplasm. The catalysed reaction is guanosine(1516) in 16S rRNA + S-adenosyl-L-methionine = N(2)-methylguanosine(1516) in 16S rRNA + S-adenosyl-L-homocysteine + H(+). Its function is as follows. Specifically methylates the guanosine in position 1516 of 16S rRNA. The chain is Ribosomal RNA small subunit methyltransferase J from Serratia proteamaculans (strain 568).